Here is a 457-residue protein sequence, read N- to C-terminus: tRNA-2-methylthio-N(6)-dimethylallyladenosine synthase (457 aa).

In terms of domain architecture, MTTase N-terminal spans 3–120; sequence KKVYIKTFGC…LPQMIDQRRA (118 aa). Residues cysteine 12, cysteine 49, cysteine 83, cysteine 157, cysteine 161, and cysteine 164 each contribute to the [4Fe-4S] cluster site. Residues 143–377 enclose the Radical SAM core domain; sequence RVEGPSAFVS…QATIEENVAR (235 aa). The region spanning 380 to 447 is the TRAM domain; it reads RSMVGKVERI…PHSLRGELLL (68 aa).

The protein belongs to the methylthiotransferase family. MiaB subfamily. As to quaternary structure, monomer. [4Fe-4S] cluster serves as cofactor.

The protein resides in the cytoplasm. It catalyses the reaction N(6)-dimethylallyladenosine(37) in tRNA + (sulfur carrier)-SH + AH2 + 2 S-adenosyl-L-methionine = 2-methylsulfanyl-N(6)-dimethylallyladenosine(37) in tRNA + (sulfur carrier)-H + 5'-deoxyadenosine + L-methionine + A + S-adenosyl-L-homocysteine + 2 H(+). Catalyzes the methylthiolation of N6-(dimethylallyl)adenosine (i(6)A), leading to the formation of 2-methylthio-N6-(dimethylallyl)adenosine (ms(2)i(6)A) at position 37 in tRNAs that read codons beginning with uridine. The chain is tRNA-2-methylthio-N(6)-dimethylallyladenosine synthase from Burkholderia ambifaria (strain MC40-6).